The sequence spans 558 residues: Potassium-transporting ATPase potassium-binding subunit (558 aa).

Transmembrane regions (helical) follow at residues 1-21, 66-86, 127-147, 166-186, 245-265, 281-301, 327-347, 354-374, 377-397, 416-436, 482-502, and 531-551; these read MEIILFLTMMVMITYVFSGYL, FNGFMGFITFVLLIVQQWLFL, MIVMTYLMFTSSASGYAVCIA, IVRFIVRVLLPLSCLISILLM, IWSNFIEMGSMMLLPMSMLFL, ALILFVAMFFIFIAILTLTMW, FGAGLSALFTVITTAFTTGSV, LTPLGGLGPMVLMMLNVVFGG, VGLMNLLIYVLLTVFICSLMV, IVLVFLIHPILILVFSALAFM, ISTGIIMLLSRYIPIILQLMI, and IVFIVLLSGLTFIPVLLLGPI.

It belongs to the KdpA family. The system is composed of three essential subunits: KdpA, KdpB and KdpC.

The protein resides in the cell membrane. In terms of biological role, part of the high-affinity ATP-driven potassium transport (or Kdp) system, which catalyzes the hydrolysis of ATP coupled with the electrogenic transport of potassium into the cytoplasm. This subunit binds the extracellular potassium ions and delivers the ions to the membrane domain of KdpB through an intramembrane tunnel. This chain is Potassium-transporting ATPase potassium-binding subunit, found in Staphylococcus aureus (strain MSSA476).